The sequence spans 124 residues: MRLIVHNMLSCNIKGVVNKFPLRIEAEKVTVKEVDFNPDFLRYMFAKIDWKALVDGARSMEYTELPDNAPDTTTLESDETFLRKFHHALLELHLEEGSLVCPETGRKFSVSKGIPNMLLHEDEV.

Residues 2–120 (RLIVHNMLSC…SKGIPNMLLH (119 aa)) enclose the TRM112 domain.

Belongs to the TRM112 family. In terms of assembly, interacts with TRM9. In terms of tissue distribution, expressed in anthers.

In terms of biological role, acts as an activator of both rRNA/tRNA and protein methyltransferases. Required for TRM9 tRNA methyltransferase activity. The polypeptide is Multifunctional methyltransferase subunit TRM112 homolog B (Arabidopsis thaliana (Mouse-ear cress)).